We begin with the raw amino-acid sequence, 121 residues long: Small ribosomal subunit protein uS13 (121 aa).

The interval 96-121 (PVRGQNTKNNARTRKGKAVAIAGKKK) is disordered. Positions 106–121 (ARTRKGKAVAIAGKKK) are enriched in basic residues.

Belongs to the universal ribosomal protein uS13 family. In terms of assembly, part of the 30S ribosomal subunit. Forms a loose heterodimer with protein S19. Forms two bridges to the 50S subunit in the 70S ribosome.

Functionally, located at the top of the head of the 30S subunit, it contacts several helices of the 16S rRNA. In the 70S ribosome it contacts the 23S rRNA (bridge B1a) and protein L5 of the 50S subunit (bridge B1b), connecting the 2 subunits; these bridges are implicated in subunit movement. Contacts the tRNAs in the A and P-sites. The chain is Small ribosomal subunit protein uS13 from Streptococcus agalactiae serotype Ia (strain ATCC 27591 / A909 / CDC SS700).